Consider the following 20-residue polypeptide: Equinatoxin-1'' (20 aa).

The interval A3 to A12 is plays an important role in the hemolytic activity. An N-terminal region region spans residues G11–Q20.

It belongs to the actinoporin family. Sea anemone subfamily. As to quaternary structure, octamer or nonamer in membranes. Monomer in the soluble state.

It localises to the secreted. The protein localises to the nematocyst. It is found in the target cell membrane. Pore-forming protein that forms cations-selective hydrophilic pores of around 1 nm and causes cardiac stimulation and cytolysis. Pore formation is a multi-step process that involves specific recognition of membrane sphingomyelin (but neither cholesterol nor phosphatidylcholine) using aromatic rich region and adjacent phosphocholine (POC) binding site, firm binding to the membrane (mainly driven by hydrophobic interactions) accompanied by the transfer of the N-terminal region to the lipid-water interface and finally pore formation after oligomerization of monomers. Cytolytic effects include red blood cells hemolysis, platelet aggregation and lysis, cytotoxic and cytostatic effects on fibroblasts. Lethality in mammals has been ascribed to severe vasospasm of coronary vessels, cardiac arrhythmia, and inotropic effects. The polypeptide is Equinatoxin-1'' (Actinia equina (Beadlet anemone)).